The primary structure comprises 710 residues: Putative transmembrane protein ORF710 (710 aa).

Positions 1–33 (MKLDRKKKRLLLKTIFSIVILILPLTFLHPTNS) are cleaved as a signal peptide. Transmembrane regions (helical) follow at residues 41–61 (VPIQ…TAPL), 76–95 (YGTL…VVWY), and 689–709 (VAIV…IFAI).

Its subcellular location is the host membrane. In Acidianus convivator (ATV), this protein is Putative transmembrane protein ORF710.